The chain runs to 454 residues: MKVPRVIIAGTNSGVGKTTTTLAVISALKNKGLKVKPYKVGPDYIDPQFHSLLAGATSDNLDLWMIPRERIFQLLADASTSFNISVIEGVMGLLDGFGSTDEGSTLDLARITGTPIILVIDGYGLSGSAAAIVKGFKDFSGDLLAGVIVTRVSGERHYDLIKKAIEDNTNVRVLGYIEKNDEVRLESRHLGLVQASELNSFSDYIERLSKVTHINVDGIIEIARASRDLDPKFSPLLSRVGYAKIAVAYDSAFDFYYEENFRVLRNLGAELVFFSPLNNEIPPEDTDGLYIGGGYPEVFAKKLAYAVDARENIAKLIKKGVPTLAECGGYMYLTRTIVGQDGIEYPGVGIVPAKTFLTDKLILGYREIVSKTSNMLLRHGETARGHEFHRSTIQFQDKVDHPFVLKYKDRFEEDGYYSNNVVASYVHIHFLSNIAIPKRFVEECIRYSKKREIS.

One can recognise a GATase cobBQ-type domain in the interval 244-435 (KIAVAYDSAF…VHIHFLSNIA (192 aa)). The Nucleophile role is filled by C327.

This sequence belongs to the CobB/CbiA family. It depends on Mg(2+) as a cofactor.

It catalyses the reaction cob(II)yrinate + 2 L-glutamine + 2 ATP + 2 H2O = cob(II)yrinate a,c diamide + 2 L-glutamate + 2 ADP + 2 phosphate + 2 H(+). Its pathway is cofactor biosynthesis; adenosylcobalamin biosynthesis; cob(II)yrinate a,c-diamide from sirohydrochlorin (anaerobic route): step 10/10. Its function is as follows. Catalyzes the ATP-dependent amidation of the two carboxylate groups at positions a and c of cobyrinate, using either L-glutamine or ammonia as the nitrogen source. The protein is Cobyrinate a,c-diamide synthase of Thermoplasma volcanium (strain ATCC 51530 / DSM 4299 / JCM 9571 / NBRC 15438 / GSS1).